Here is a 74-residue protein sequence, read N- to C-terminus: MAKETEMEFEGTVVEVLPNAQFKVKLENGVVINAHVSGKIRMHYIRILPGDKVTIVISPYDMTRGRITYRKIGK.

An S1-like domain is found at 1–72 (MAKETEMEFE…TRGRITYRKI (72 aa)).

The protein belongs to the IF-1 family. Component of the 30S ribosomal translation pre-initiation complex which assembles on the 30S ribosome in the order IF-2 and IF-3, IF-1 and N-formylmethionyl-tRNA(fMet); mRNA recruitment can occur at any time during PIC assembly.

It localises to the cytoplasm. In terms of biological role, one of the essential components for the initiation of protein synthesis. Stabilizes the binding of IF-2 and IF-3 on the 30S subunit to which N-formylmethionyl-tRNA(fMet) subsequently binds. Helps modulate mRNA selection, yielding the 30S pre-initiation complex (PIC). Upon addition of the 50S ribosomal subunit IF-1, IF-2 and IF-3 are released leaving the mature 70S translation initiation complex. The polypeptide is Translation initiation factor IF-1 (Mycoplasma capricolum subsp. capricolum (strain California kid / ATCC 27343 / NCTC 10154)).